A 380-amino-acid polypeptide reads, in one-letter code: Ceramide synthase 2 (380 aa).

Residues 1–40 (MLQTLYDYFWWERLWLPVNLTWADLEDRDGRVYAKASDLY) are Lumenal-facing. Residue Asn19 is glycosylated (N-linked (GlcNAc...) asparagine). Residues 41 to 61 (ITLPLALLFLIVRYFFELYVA) traverse the membrane as a helical segment. Residues 67-128 (LLNIKEKTRL…RRRRNQDRPS (62 aa)) form a homeobox-like region. The region spanning 131 to 332 (KKFREASWRF…ILRMAHKFIT (202 aa)) is the TLC domain. 4 consecutive transmembrane segments (helical) span residues 140-160 (FTFY…KPWF), 181-201 (WYYM…ASDV), 209-229 (QIIH…ANYI), and 264-284 (IFIV…PFWI). The short motif at 291 to 300 (YPLELYPAFF) is the Last loop motif element. A helical membrane pass occupies residues 304–324 (FFNSMMGVLQLLHIFWAYLIL). The Cytoplasmic portion of the chain corresponds to 325 to 380 (RMAHKFITGKLVEDERSDREETESSEGEEAAAGGGAKSRPLANGHPILNNNHRKND). Positions 338–380 (DERSDREETESSEGEEAAAGGGAKSRPLANGHPILNNNHRKND) are disordered. Residue Ser341 is modified to Phosphoserine. A compositionally biased stretch (acidic residues) spans 344–353 (EETESSEGEE). Thr346 is modified (phosphothreonine). Phosphoserine occurs at positions 348 and 349.

As to quaternary structure, interacts with ATP6V0C, ASGR1, ASGR2 and SLC22A1/OCT1. Interacts with ELOV1, HSD17B12 and TECR. Interacts with NDUFS2. Interacts with PAQR4; the interaction regulates the stability and activity of CERS2 and is inhibited in presence of ceramides. Acetylated. Deacetylation by SIRT3 increases enzyme activity and promotes mitochondrial ceramide accumulation. Post-translationally, phosphorylated at the C-terminus by CK2, leading to increase the ceramide synthase activity. Expressed in kidney, liver, brain, heart, placenta and lung.

It is found in the endoplasmic reticulum membrane. It carries out the reaction a very long-chain fatty acyl-CoA + a sphingoid base = an N-(very-long-chain fatty acyl)-sphingoid base + CoA + H(+). The catalysed reaction is docosanoyl-CoA + sphinganine = N-docosanoylsphinganine + CoA + H(+). The enzyme catalyses tetracosanoyl-CoA + sphinganine = N-tetracosanoylsphinganine + CoA + H(+). It catalyses the reaction hexacosanoyl-CoA + sphinganine = N-hexacosanoylsphinganine + CoA + H(+). It carries out the reaction (15Z)-tetracosenoyl-CoA + sphinganine = N-(15Z-tetracosenoyl)-sphinganine + CoA + H(+). The catalysed reaction is 2-hydroxytetracosanoyl-CoA + sphinganine = N-(2-hydroxytetracosanoyl)-sphinganine + CoA + H(+). The enzyme catalyses 2-hydroxydocosanoyl-CoA + sphinganine = N-(2-hydroxydocosanoyl)-sphinganine + CoA + H(+). It catalyses the reaction 2-hydroxytetracosenoyl-CoA + sphinganine = N-(2-hydroxytetracosenoyl)-sphinganine + CoA + H(+). It carries out the reaction tetracosenoyl-CoA + sphinganine = an N-tetracosenoylsphinganine + CoA + H(+). The catalysed reaction is hexacosenoyl-CoA + sphinganine = N-hexacosenoylsphinganine + CoA + H(+). The enzyme catalyses tetracosanoyl-CoA + sphing-4-enine = N-tetracosanoyl-sphing-4-enine + CoA + H(+). It catalyses the reaction tetracosenoyl-CoA + sphing-4-enine = N-(tetracosenoyl)-sphing-4-enine + CoA + H(+). It carries out the reaction heptadecasphing-4-enine + tetracosanoyl-CoA = N-tetracosanoyl-heptadecasphing-4-enine + CoA + H(+). The catalysed reaction is a fatty acyl-CoA + sphing-4-enine = an N-acylsphing-4-enine + CoA + H(+). The enzyme catalyses sphing-4-enine + hexadecanoyl-CoA = N-hexadecanoylsphing-4-enine + CoA + H(+). It catalyses the reaction sphing-4-enine + octadecanoyl-CoA = N-octadecanoylsphing-4-enine + CoA + H(+). It carries out the reaction eicosanoyl-CoA + sphing-4-enine = N-eicosanoyl-sphing-4-enine + CoA + H(+). The catalysed reaction is sphinganine + hexadecanoyl-CoA = N-hexadecanoylsphinganine + CoA + H(+). The enzyme catalyses sphinganine + octadecanoyl-CoA = N-(octadecanoyl)-sphinganine + CoA + H(+). It catalyses the reaction sphinganine + (9Z)-octadecenoyl-CoA = N-(9Z-octadecenoyl)-sphinganine + CoA + H(+). It carries out the reaction eicosanoyl-CoA + sphinganine = N-eicosanoylsphinganine + CoA + H(+). It functions in the pathway lipid metabolism; sphingolipid metabolism. Its activity is regulated as follows. Ceramide synthase activity is inhibited by sphingosine-1-phosphate. Its function is as follows. Ceramide synthase that catalyzes the transfer of the acyl chain from acyl-CoA to a sphingoid base, with high selectivity toward very-long-chain fatty acyl-CoA (chain length C22-C27). N-acylates sphinganine and sphingosine bases to form dihydroceramides and ceramides in de novo synthesis and salvage pathways, respectively. Plays a non-redundant role in the synthesis of ceramides with very-long-chain fatty acids in kidney, liver and brain. Regulates the abundance of myelin-specific sphingolipids galactosylceramide and sulfatide that affects myelin sheath architecture and motor neuron functions. This Homo sapiens (Human) protein is Ceramide synthase 2.